The following is a 463-amino-acid chain: ATP synthase subunit beta (463 aa).

151–158 (GGAGVGKT) is a binding site for ATP.

It belongs to the ATPase alpha/beta chains family. In terms of assembly, F-type ATPases have 2 components, CF(1) - the catalytic core - and CF(0) - the membrane proton channel. CF(1) has five subunits: alpha(3), beta(3), gamma(1), delta(1), epsilon(1). CF(0) has three main subunits: a(1), b(2) and c(9-12). The alpha and beta chains form an alternating ring which encloses part of the gamma chain. CF(1) is attached to CF(0) by a central stalk formed by the gamma and epsilon chains, while a peripheral stalk is formed by the delta and b chains.

The protein localises to the cell membrane. The catalysed reaction is ATP + H2O + 4 H(+)(in) = ADP + phosphate + 5 H(+)(out). Functionally, produces ATP from ADP in the presence of a proton gradient across the membrane. The catalytic sites are hosted primarily by the beta subunits. This is ATP synthase subunit beta from Clostridium botulinum (strain Loch Maree / Type A3).